The chain runs to 425 residues: ADP-ribose glycohydrolase MACROD2 (425 aa).

The Macro domain maps to 59–240 (QETSQVKKSL…IYKKKMNEFF (182 aa)). Residues 77-79 (GDI), 90-92 (AAN), and 97-102 (GGGGVD) each bind substrate. Lysine 170 participates in a covalent cross-link: Glycyl lysine isopeptide (Lys-Gly) (interchain with G-Cter in ubiquitin). Residues 185–191 (ISTGIYG) and phenylalanine 224 contribute to the substrate site. The interval 243–425 (DDNNEEEEDV…EAKEQRNGTK (183 aa)) is disordered. Residues 244–262 (DNNEEEEDVEMKEDSDENG) show a composition bias toward acidic residues. The segment covering 302 to 343 (EDFAKDENITKGGEVTDHSVRDQDHPDGQENDSTKNEIKIET) has biased composition (basic and acidic residues). Over residues 344–360 (ESQSSYMETEELSSNQE) the composition is skewed to polar residues. Composition is skewed to basic and acidic residues over residues 381–391 (EGEKAPGEDTP) and 415–425 (DEAKEQRNGTK).

It belongs to the MacroD-type family. MacroD1/2-like subfamily. In terms of assembly, interacts with ADP-ribosylated PARP1.

The protein resides in the nucleus. It carries out the reaction 2''-O-acetyl-ADP-D-ribose + H2O = ADP-D-ribose + acetate + H(+). The enzyme catalyses 4-O-(ADP-D-ribosyl)-L-aspartyl-[protein] + H2O = L-aspartyl-[protein] + ADP-D-ribose + H(+). The catalysed reaction is 5-O-(ADP-D-ribosyl)-L-glutamyl-[protein] + H2O = L-glutamyl-[protein] + ADP-D-ribose + H(+). It catalyses the reaction alpha-NAD(+) + H2O = ADP-D-ribose + nicotinamide + H(+). With respect to regulation, subject to product inhibition by ADP-ribose. Functionally, removes ADP-ribose from aspartate and glutamate residues in proteins bearing a single ADP-ribose moiety. Inactive towards proteins bearing poly-ADP-ribose. Deacetylates O-acetyl-ADP ribose, a signaling molecule generated by the deacetylation of acetylated lysine residues in histones and other proteins. This Homo sapiens (Human) protein is ADP-ribose glycohydrolase MACROD2.